The sequence spans 521 residues: Lysine--tRNA ligase (521 aa).

The short motif at 32–40 (PSGTVHIGN) is the 'HIGH' region element. The 'KMSKS' region signature appears at 280-284 (KISSS).

The protein belongs to the class-I aminoacyl-tRNA synthetase family.

It localises to the cytoplasm. The enzyme catalyses tRNA(Lys) + L-lysine + ATP = L-lysyl-tRNA(Lys) + AMP + diphosphate. The polypeptide is Lysine--tRNA ligase (lysS) (Borreliella burgdorferi (strain ATCC 35210 / DSM 4680 / CIP 102532 / B31) (Borrelia burgdorferi)).